Reading from the N-terminus, the 125-residue chain is Small ribosomal subunit protein uS17 (125 aa).

Disordered regions lie at residues 1 to 21 (MSSS…VSSR) and 101 to 125 (VAAQ…APQA).

Belongs to the universal ribosomal protein uS17 family. As to quaternary structure, part of the 30S ribosomal subunit.

Its function is as follows. One of the primary rRNA binding proteins, it binds specifically to the 5'-end of 16S ribosomal RNA. The polypeptide is Small ribosomal subunit protein uS17 (Opitutus terrae (strain DSM 11246 / JCM 15787 / PB90-1)).